The chain runs to 286 residues: Beta-lactamase SHV-46 (286 aa).

The signal sequence occupies residues 1–21 (MRYIRLCIISLLATLPLAVHA). The active-site Acyl-ester intermediate is the Ser66. A disulfide bridge links Cys73 with Cys119. The active-site Proton acceptor is Glu164. 230-232 (KTG) serves as a coordination point for substrate.

The protein belongs to the class-A beta-lactamase family.

It catalyses the reaction a beta-lactam + H2O = a substituted beta-amino acid. In Klebsiella oxytoca, this protein is Beta-lactamase SHV-46 (bla).